The sequence spans 89 residues: Large ribosomal subunit protein eL31 (89 aa).

It belongs to the eukaryotic ribosomal protein eL31 family.

The polypeptide is Large ribosomal subunit protein eL31 (Picrophilus torridus (strain ATCC 700027 / DSM 9790 / JCM 10055 / NBRC 100828 / KAW 2/3)).